The chain runs to 334 residues: Glyceraldehyde-3-phosphate dehydrogenase (334 aa).

Residues 10 to 11, Asp33, Lys77, and Thr119 contribute to the NAD(+) site; that span reads RI. D-glyceraldehyde 3-phosphate-binding positions include 149 to 151, Thr180, 209 to 210, and Arg232; these read SCT and TG. Cys150 (nucleophile) is an active-site residue. Asn314 lines the NAD(+) pocket.

The protein belongs to the glyceraldehyde-3-phosphate dehydrogenase family. Homotetramer.

Its subcellular location is the cytoplasm. It catalyses the reaction D-glyceraldehyde 3-phosphate + phosphate + NAD(+) = (2R)-3-phospho-glyceroyl phosphate + NADH + H(+). The protein operates within carbohydrate degradation; glycolysis; pyruvate from D-glyceraldehyde 3-phosphate: step 1/5. Catalyzes the oxidative phosphorylation of glyceraldehyde 3-phosphate (G3P) to 1,3-bisphosphoglycerate (BPG) using the cofactor NAD. The first reaction step involves the formation of a hemiacetal intermediate between G3P and a cysteine residue, and this hemiacetal intermediate is then oxidized to a thioester, with concomitant reduction of NAD to NADH. The reduced NADH is then exchanged with the second NAD, and the thioester is attacked by a nucleophilic inorganic phosphate to produce BPG. This Chlamydia trachomatis serovar D (strain ATCC VR-885 / DSM 19411 / UW-3/Cx) protein is Glyceraldehyde-3-phosphate dehydrogenase (gap).